A 432-amino-acid chain; its full sequence is Tol-Pal system protein TolB (432 aa).

The N-terminal stretch at 1–22 is a signal peptide; that stretch reads MMFKKCLSVLFTCLIFISSARA.

The protein belongs to the TolB family. In terms of assembly, the Tol-Pal system is composed of five core proteins: the inner membrane proteins TolA, TolQ and TolR, the periplasmic protein TolB and the outer membrane protein Pal. They form a network linking the inner and outer membranes and the peptidoglycan layer.

It localises to the periplasm. In terms of biological role, part of the Tol-Pal system, which plays a role in outer membrane invagination during cell division and is important for maintaining outer membrane integrity. In Marinomonas sp. (strain MWYL1), this protein is Tol-Pal system protein TolB.